Consider the following 430-residue polypeptide: Enolase (430 aa).

Gln162 is a binding site for (2R)-2-phosphoglycerate. Glu204 serves as the catalytic Proton donor. 3 residues coordinate Mg(2+): Asp241, Glu283, and Asp310. Residues Lys335, Arg364, Ser365, and Lys386 each coordinate (2R)-2-phosphoglycerate. The active-site Proton acceptor is Lys335.

The protein belongs to the enolase family. Mg(2+) is required as a cofactor.

The protein resides in the cytoplasm. It is found in the secreted. It localises to the cell surface. It catalyses the reaction (2R)-2-phosphoglycerate = phosphoenolpyruvate + H2O. It functions in the pathway carbohydrate degradation; glycolysis; pyruvate from D-glyceraldehyde 3-phosphate: step 4/5. Functionally, catalyzes the reversible conversion of 2-phosphoglycerate (2-PG) into phosphoenolpyruvate (PEP). It is essential for the degradation of carbohydrates via glycolysis. This is Enolase from Mycobacteroides abscessus (strain ATCC 19977 / DSM 44196 / CCUG 20993 / CIP 104536 / JCM 13569 / NCTC 13031 / TMC 1543 / L948) (Mycobacterium abscessus).